We begin with the raw amino-acid sequence, 102 residues long: UPF0473 protein SAS1551 (102 aa).

It belongs to the UPF0473 family.

The sequence is that of UPF0473 protein SAS1551 from Staphylococcus aureus (strain MSSA476).